Consider the following 88-residue polypeptide: Small integral membrane protein 13 (88 aa).

The chain crosses the membrane as a helical span at residues 10-30 (LVFVATLLIVLLLMVCGWYFV). The segment covering 48 to 61 (TGSQEGDNEQPSGS) has biased composition (polar residues). The segment at 48–88 (TGSQEGDNEQPSGSETEEDPSASPQKIRSARQRRPPVDAGH) is disordered. Phosphoserine occurs at positions 59 and 61. The residue at position 63 (Thr-63) is a Phosphothreonine. Residue Ser-70 is modified to Phosphoserine.

It belongs to the SMIM13 family.

It localises to the membrane. The chain is Small integral membrane protein 13 (Smim13) from Mus musculus (Mouse).